Here is a 969-residue protein sequence, read N- to C-terminus: RNA polymerase-associated protein RapA (969 aa).

Positions 162-339 (EVGQRVAPRV…FARLALLDAD (178 aa)) constitute a Helicase ATP-binding domain. 175 to 182 (DEVGLGKT) contacts ATP. The short motif at 285–288 (DEAH) is the DEAH box element. Residues 492–663 (RIEWLITFLK…IFLKNPQAVG (172 aa)) enclose the Helicase C-terminal domain.

The protein belongs to the SNF2/RAD54 helicase family. RapA subfamily. As to quaternary structure, interacts with the RNAP. Has a higher affinity for the core RNAP than for the holoenzyme. Its ATPase activity is stimulated by binding to RNAP.

Its function is as follows. Transcription regulator that activates transcription by stimulating RNA polymerase (RNAP) recycling in case of stress conditions such as supercoiled DNA or high salt concentrations. Probably acts by releasing the RNAP, when it is trapped or immobilized on tightly supercoiled DNA. Does not activate transcription on linear DNA. Probably not involved in DNA repair. The sequence is that of RNA polymerase-associated protein RapA from Actinobacillus pleuropneumoniae serotype 3 (strain JL03).